The following is a 396-amino-acid chain: Elongation factor Tu (396 aa).

One can recognise a tr-type G domain in the interval 10-206; sequence KPHVNVGTIG…TMDSYIPEPV (197 aa). The interval 19-26 is G1; sequence GHVDHGKT. 19 to 26 is a binding site for GTP; the sequence is GHVDHGKT. Position 26 (T26) interacts with Mg(2+). Residues 60–64 are G2; sequence GITIS. The segment at 81-84 is G3; sequence DCPG. Residues 81–85 and 136–139 each bind GTP; these read DCPGH and NKAD. The segment at 136–139 is G4; the sequence is NKAD. Residues 174 to 176 are G5; the sequence is SAL.

It belongs to the TRAFAC class translation factor GTPase superfamily. Classic translation factor GTPase family. EF-Tu/EF-1A subfamily. Monomer.

The protein localises to the cytoplasm. It carries out the reaction GTP + H2O = GDP + phosphate + H(+). In terms of biological role, GTP hydrolase that promotes the GTP-dependent binding of aminoacyl-tRNA to the A-site of ribosomes during protein biosynthesis. The protein is Elongation factor Tu of Legionella pneumophila (strain Paris).